A 346-amino-acid polypeptide reads, in one-letter code: Senescence-specific cysteine protease SAG12 (346 aa).

The N-terminal stretch at 1–25 is a signal peptide; sequence MALKHMQIFLFVAIFSSFCFSITLS. An N-linked (GlcNAc...) asparagine glycan is attached at Asn-124. 3 disulfide bridges follow: Cys-151–Cys-192, Cys-185–Cys-225, and Cys-283–Cys-335. The active site involves Cys-154. His-289 is a catalytic residue. Asn-301 is a glycosylation site (N-linked (GlcNAc...) asparagine). The active site involves Asn-310.

The protein belongs to the peptidase C1 family. In terms of tissue distribution, found in senescent leaves, especially in senescence-associated vacuoles- (SAVs) containing cells (e.g. mesophyll and guard cells), and in senescencing ovules of unfertilised pistils.

The protein localises to the vacuole. Cysteine protease that may have a developmental senescence specific cell death function during apoptosis, heavy metal detoxification, and hypersensitive response. In Arabidopsis thaliana (Mouse-ear cress), this protein is Senescence-specific cysteine protease SAG12.